Reading from the N-terminus, the 250-residue chain is Cruxrhodopsin-1 (250 aa).

Over 1–9 (MPEPGSEAI) the chain is Extracellular. Residues 10–27 (WLWLGTAGMFLGMLYFIA) traverse the membrane as a helical segment. Topologically, residues 28 to 41 (RGWGETDSRRQKFY) are cytoplasmic. Residues 42–60 (IATILITAIAFVNYLAMAL) form a helical membrane-spanning segment. Residues 61–77 (GFGLTIVEFAGEEHPIY) are Extracellular-facing. A helical membrane pass occupies residues 78–94 (WARYSDWLFTTPLLLYD). Over 95-105 (LGLLAGADRNT) the chain is Cytoplasmic. Residues 106 to 125 (ITSLVSLDVLMIGTGLVATL) form a helical membrane-spanning segment. Topologically, residues 126–138 (SPGSGVLSAGAER) are extracellular. The chain crosses the membrane as a helical span at residues 139 to 158 (LVWWGISTAFLLVLLYFLFS). Residues 159-176 (SLSGRVADLPSDTRSTFK) are Cytoplasmic-facing. A helical membrane pass occupies residues 177–195 (TLRNLVTVVWLVYPVWWLI). At 196–207 (GTEGIGLVGIGI) the chain is on the extracellular side. A helical transmembrane segment spans residues 208-227 (ETAGFMVIDLTAKVGFGIIL). K220 is subject to N6-(retinylidene)lysine. At 228–250 (LRSHGVLDGAAETTGTGATPADD) the chain is on the cytoplasmic side.

This sequence belongs to the archaeal/bacterial/fungal opsin family. In terms of assembly, homotrimer.

Its subcellular location is the cell membrane. Light-driven proton pump. This chain is Cruxrhodopsin-1 (cop1), found in Haloarcula argentinensis.